The following is a 597-amino-acid chain: Elongation factor 4 (597 aa).

The 183-residue stretch at Asp2–Lys184 folds into the tr-type G domain. GTP contacts are provided by residues Asp14–Thr19 and Asn131–Asp134.

Belongs to the TRAFAC class translation factor GTPase superfamily. Classic translation factor GTPase family. LepA subfamily.

It is found in the cell inner membrane. It catalyses the reaction GTP + H2O = GDP + phosphate + H(+). Functionally, required for accurate and efficient protein synthesis under certain stress conditions. May act as a fidelity factor of the translation reaction, by catalyzing a one-codon backward translocation of tRNAs on improperly translocated ribosomes. Back-translocation proceeds from a post-translocation (POST) complex to a pre-translocation (PRE) complex, thus giving elongation factor G a second chance to translocate the tRNAs correctly. Binds to ribosomes in a GTP-dependent manner. The sequence is that of Elongation factor 4 from Cupriavidus pinatubonensis (strain JMP 134 / LMG 1197) (Cupriavidus necator (strain JMP 134)).